Here is a 594-residue protein sequence, read N- to C-terminus: Chitooligosaccharidolytic beta-N-acetylglucosaminidase (594 aa).

The signal sequence occupies residues 1–22; that stretch reads MWSRRIPLFIFGVLVLILSVAA. 2 cysteine pairs are disulfide-bonded: Cys-31-Cys-59 and Cys-36-Cys-55. Asn-164 is a glycosylation site (N-linked (GlcNAc...) asparagine). Residues Asp-249 and His-303 each act as charge relay system in the active site. Intrachain disulfides connect Cys-316/Cys-373 and Cys-326/Cys-331. Glu-368 functions as the Charge relay system in the catalytic mechanism. Asn-375 carries N-linked (GlcNAc...) asparagine glycosylation. 2 disulfide bridges follow: Cys-478-Cys-491 and Cys-585-Cys-592.

It belongs to the glycosyl hydrolase 20 family. Homodimer.

The enzyme catalyses Hydrolysis of terminal non-reducing N-acetyl-D-hexosamine residues in N-acetyl-beta-D-hexosaminides.. With respect to regulation, inhibited by O-(2-acetamido-2-deoxy-D-glucopyransylidene)-amino-N-phenylcarbamate (PUGNAc). Inhibited by thiabendazole (TMG)-chitotriomycin. Inhibited by 6-(dimethylamino)-2-(2-(((5-methyl-1,3,4-thiadiazol-2-yl)methyl)amino)ethyl)- 1H-benzo[de]isoquinoline-1,3(2H)-dione (Q2), a synthesized non-carbohydrate unsymmetrical dyad of naphthalimide and thiadiazole having a dimethylamino group at C4 of the naphthalimide. Inhibited poorly by N-acetyl-glucosamine (NAG)-thiazoline (NGT), but when the thiazoline ring of NGT is replaced by a bulky substituent such as in compound 1,2-dideoxy-2'-methylamino-alpha-D-glucopyranoso-[2,1-d]-Delta2'-thiazoline (NMAGT), the inhibition constant Ki is lowered 600-fold compared to that of NGT. Inhibited by berberine, berberine analogs thalifendine and palmatine, and berberine derivative SYSU-1, but not by berberine analog tetrahydroberberine. Hydrolyzes one beta-GlcNAc unit at a time from the non-reducing ends of substrates, with a preference for shorter substrates. The 2-acetamido group and the beta-glycoside bond linkage in the substrate are required for its activity. Active with p-nitrophenyl (pNP)-beta-GlcNAc, pNP-beta-GalNAc and chitooligosaccharides (degree of polymerization from 2 to 6), but not with the complex N-glycan substrate (GlcNAcbeta-1,2Manalpha-1,6)(GlcNAcbeta-1,2Manalpha-1,3)Manbeta-1,4GlcNAcbeta-1,4GlcNAc-PA (GnGn-PA), pNP-alpha-GlcNAc or with the long polymer colloidal chitin. Involved in chitin catabolism. Involved in the degradation of old cuticle during the pupation stage. This is Chitooligosaccharidolytic beta-N-acetylglucosaminidase from Ostrinia furnacalis (Asian corn borer).